Reading from the N-terminus, the 119-residue chain is Beta-2-microglobulin (119 aa).

The first 20 residues, 1–20 (MARFVVVALLVLLSLSGLEA), serve as a signal peptide directing secretion. The 90-residue stretch at 25 to 114 (PKIQVYSRHP…VTLSTPKTVK (90 aa)) folds into the Ig-like C1-type domain. A disulfide bridge connects residues cysteine 45 and cysteine 100.

This sequence belongs to the beta-2-microglobulin family. In terms of assembly, heterodimer of an alpha chain and a beta chain. Beta-2-microglobulin is the beta-chain of major histocompatibility complex class I molecules.

The protein resides in the secreted. Functionally, component of the class I major histocompatibility complex (MHC). Involved in the presentation of peptide antigens to the immune system. The sequence is that of Beta-2-microglobulin (B2M) from Aotus lemurinus (Gray-bellied night monkey).